A 347-amino-acid polypeptide reads, in one-letter code: Protease HtpX homolog (347 aa).

The next 4 helical transmembrane spans lie at 8–28 (VALG…ATIA), 44–64 (AMAL…YLFV), 76–96 (LSFL…TYFA), and 141–163 (AFAY…LALT). His-174 lines the Zn(2+) pocket. The active site involves Glu-175. His-178 contacts Zn(2+). Helical transmembrane passes span 185–205 (AIML…VTAV) and 221–241 (ILAA…LLVL). Zn(2+) is bound at residue Glu-248.

Belongs to the peptidase M48B family. Requires Zn(2+) as cofactor.

It localises to the cell membrane. The protein is Protease HtpX homolog of Pyrobaculum aerophilum (strain ATCC 51768 / DSM 7523 / JCM 9630 / CIP 104966 / NBRC 100827 / IM2).